A 469-amino-acid polypeptide reads, in one-letter code: Probable glycine dehydrogenase (decarboxylating) subunit 1 (469 aa).

Belongs to the GcvP family. N-terminal subunit subfamily. The glycine cleavage system is composed of four proteins: P, T, L and H. In this organism, the P 'protein' is a heterodimer of two subunits.

It catalyses the reaction N(6)-[(R)-lipoyl]-L-lysyl-[glycine-cleavage complex H protein] + glycine + H(+) = N(6)-[(R)-S(8)-aminomethyldihydrolipoyl]-L-lysyl-[glycine-cleavage complex H protein] + CO2. In terms of biological role, the glycine cleavage system catalyzes the degradation of glycine. The P protein binds the alpha-amino group of glycine through its pyridoxal phosphate cofactor; CO(2) is released and the remaining methylamine moiety is then transferred to the lipoamide cofactor of the H protein. In Staphylothermus marinus (strain ATCC 43588 / DSM 3639 / JCM 9404 / F1), this protein is Probable glycine dehydrogenase (decarboxylating) subunit 1.